The primary structure comprises 544 residues: CTP synthase (544 aa).

Positions 1–266 (MTKFIFVTGG…DDLICERFGL (266 aa)) are amidoligase domain. Serine 13 is a binding site for CTP. Serine 13 contacts UTP. ATP is bound by residues 14–19 (SLGKGI) and aspartate 71. Mg(2+) is bound by residues aspartate 71 and glutamate 140. Residues 147-149 (DIE), 187-192 (KTKPTQ), and lysine 223 each bind CTP. Residues 187 to 192 (KTKPTQ) and lysine 223 each bind UTP. Positions 291–543 (TVAMVGKYVE…VKAAKNYSEA (253 aa)) constitute a Glutamine amidotransferase type-1 domain. Glycine 354 is an L-glutamine binding site. Cysteine 381 functions as the Nucleophile; for glutamine hydrolysis in the catalytic mechanism. L-glutamine contacts are provided by residues 382-385 (LGMQ), glutamate 404, and arginine 471. Catalysis depends on residues histidine 516 and glutamate 518.

This sequence belongs to the CTP synthase family. Homotetramer.

It carries out the reaction UTP + L-glutamine + ATP + H2O = CTP + L-glutamate + ADP + phosphate + 2 H(+). It catalyses the reaction L-glutamine + H2O = L-glutamate + NH4(+). The catalysed reaction is UTP + NH4(+) + ATP = CTP + ADP + phosphate + 2 H(+). It functions in the pathway pyrimidine metabolism; CTP biosynthesis via de novo pathway; CTP from UDP: step 2/2. Its activity is regulated as follows. Allosterically activated by GTP, when glutamine is the substrate; GTP has no effect on the reaction when ammonia is the substrate. The allosteric effector GTP functions by stabilizing the protein conformation that binds the tetrahedral intermediate(s) formed during glutamine hydrolysis. Inhibited by the product CTP, via allosteric rather than competitive inhibition. Functionally, catalyzes the ATP-dependent amination of UTP to CTP with either L-glutamine or ammonia as the source of nitrogen. Regulates intracellular CTP levels through interactions with the four ribonucleotide triphosphates. The chain is CTP synthase from Psychrobacter arcticus (strain DSM 17307 / VKM B-2377 / 273-4).